A 124-amino-acid polypeptide reads, in one-letter code: Fluoride-specific ion channel FluC (124 aa).

4 helical membrane-spanning segments follow: residues 4 to 24, 35 to 55, 60 to 80, and 102 to 122; these read LLLV…ISIF, FGTL…YALG, ISPE…TTFS, and VVLN…LVFS. G74 and T77 together coordinate Na(+).

The protein belongs to the fluoride channel Fluc/FEX (TC 1.A.43) family.

It localises to the cell inner membrane. The enzyme catalyses fluoride(in) = fluoride(out). Na(+) is not transported, but it plays an essential structural role and its presence is essential for fluoride channel function. In terms of biological role, fluoride-specific ion channel. Important for reducing fluoride concentration in the cell, thus reducing its toxicity. The polypeptide is Fluoride-specific ion channel FluC (Shewanella oneidensis (strain ATCC 700550 / JCM 31522 / CIP 106686 / LMG 19005 / NCIMB 14063 / MR-1)).